Consider the following 75-residue polypeptide: Cytochrome c oxidase subunit 6C (75 aa).

Topologically, residues 1–13 (MAPEVLPKPQMRG) are mitochondrial matrix. A helical membrane pass occupies residues 14–54 (LLARRLRFHMVTGFVLSLGVAALYKVGVADKRKKAYADFYR). Residues 55–75 (NYDAMKDFEEMRKAGIFQSVK) are Mitochondrial intermembrane-facing.

It belongs to the cytochrome c oxidase subunit 6c family. Component of the cytochrome c oxidase (complex IV, CIV), a multisubunit enzyme composed of 14 subunits. The complex is composed of a catalytic core of 3 subunits MT-CO1, MT-CO2 and MT-CO3, encoded in the mitochondrial DNA, and 11 supernumerary subunits COX4I, COX5A, COX5B, COX6A, COX6B, COX6C, COX7A, COX7B, COX7C, COX8 and NDUFA4, which are encoded in the nuclear genome. The complex exists as a monomer or a dimer and forms supercomplexes (SCs) in the inner mitochondrial membrane with NADH-ubiquinone oxidoreductase (complex I, CI) and ubiquinol-cytochrome c oxidoreductase (cytochrome b-c1 complex, complex III, CIII), resulting in different assemblies (supercomplex SCI(1)III(2)IV(1) and megacomplex MCI(2)III(2)IV(2)).

Its subcellular location is the mitochondrion inner membrane. The protein operates within energy metabolism; oxidative phosphorylation. Component of the cytochrome c oxidase, the last enzyme in the mitochondrial electron transport chain which drives oxidative phosphorylation. The respiratory chain contains 3 multisubunit complexes succinate dehydrogenase (complex II, CII), ubiquinol-cytochrome c oxidoreductase (cytochrome b-c1 complex, complex III, CIII) and cytochrome c oxidase (complex IV, CIV), that cooperate to transfer electrons derived from NADH and succinate to molecular oxygen, creating an electrochemical gradient over the inner membrane that drives transmembrane transport and the ATP synthase. Cytochrome c oxidase is the component of the respiratory chain that catalyzes the reduction of oxygen to water. Electrons originating from reduced cytochrome c in the intermembrane space (IMS) are transferred via the dinuclear copper A center (CU(A)) of subunit 2 and heme A of subunit 1 to the active site in subunit 1, a binuclear center (BNC) formed by heme A3 and copper B (CU(B)). The BNC reduces molecular oxygen to 2 water molecules using 4 electrons from cytochrome c in the IMS and 4 protons from the mitochondrial matrix. The chain is Cytochrome c oxidase subunit 6C (COX6C) from Macaca silenus (Lion-tailed macaque).